Here is a 91-residue protein sequence, read N- to C-terminus: C-C motif chemokine 5 (91 aa).

The first 23 residues, 1–23 (MKVSAAALCVILTTAALCVPASA), serve as a signal peptide directing secretion. Disulfide bonds link cysteine 33-cysteine 57 and cysteine 34-cysteine 73.

Belongs to the intercrine beta (chemokine CC) family.

The protein localises to the secreted. Functionally, chemoattractant for blood monocytes, memory T-helper cells and eosinophils. Causes the release of histamine from basophils and activates eosinophils. May activate several chemokine receptors including CCR1, CCR3, CCR4 and CCR5. May also be an agonist of the G protein-coupled receptor GPR75. Together with GPR75, may play a role in neuron survival through activation of a downstream signaling pathway involving the PI3, Akt and MAP kinases. By activating GPR75 may also play a role in insulin secretion by islet cells. This Cavia porcellus (Guinea pig) protein is C-C motif chemokine 5 (CCL5).